A 445-amino-acid polypeptide reads, in one-letter code: Phosphoglucosamine mutase (445 aa).

S102 acts as the Phosphoserine intermediate in catalysis. Mg(2+)-binding residues include S102, D241, D243, and D245. S102 carries the post-translational modification Phosphoserine.

The protein belongs to the phosphohexose mutase family. The cofactor is Mg(2+). Post-translationally, activated by phosphorylation.

It catalyses the reaction alpha-D-glucosamine 1-phosphate = D-glucosamine 6-phosphate. In terms of biological role, catalyzes the conversion of glucosamine-6-phosphate to glucosamine-1-phosphate. The polypeptide is Phosphoglucosamine mutase (Acinetobacter baumannii (strain ACICU)).